A 342-amino-acid chain; its full sequence is Arginase 1, mitochondrial (342 aa).

The transit peptide at 1–22 (MSRIIGRKGINYIHRLNSASFT) directs the protein to the mitochondrion. Residues serine 77 and 96 to 99 (GSTN) contribute to the L-ornithine site. Residues histidine 161, aspartate 185, histidine 187, and aspartate 189 each contribute to the Mn(2+) site. Position 189–191 (189–191 (DIY)) interacts with L-ornithine. Position 195–197 (195–197 (EGN)) interacts with substrate. An L-ornithine-binding site is contributed by serine 224. Mn(2+) is bound by residues aspartate 270 and aspartate 272. Residue glutamate 313 coordinates substrate.

This sequence belongs to the arginase family. Forms homohexamers. It depends on Mn(2+) as a cofactor. In terms of tissue distribution, expressed in vasculature of roots, root tips, cotyledons, leaves, cauline leaves, stems, sepals and pollen.

It is found in the mitochondrion. The catalysed reaction is L-arginine + H2O = urea + L-ornithine. It catalyses the reaction agmatine + H2O = urea + putrescine. Its pathway is nitrogen metabolism; urea cycle; L-ornithine and urea from L-arginine: step 1/1. The protein operates within amine and polyamine biosynthesis; putrescine biosynthesis via agmatine pathway; putrescine from agmatine: step 1/1. In terms of biological role, catalyzes the hydrolysis of L-arginine to urea and L-ornithine. The latter can be utilized in the urea cycle or as a precursor for the synthesis of both polyamines and proline. Possesses agmatinase activity. Catalyzes the formation of putrescine from agmatine. This Arabidopsis thaliana (Mouse-ear cress) protein is Arginase 1, mitochondrial.